The primary structure comprises 257 residues: Putative aldolase class 2 protein CC_1201 (257 aa).

Zn(2+)-binding residues include histidine 114, histidine 116, and histidine 177.

The protein belongs to the aldolase class II family. It depends on Zn(2+) as a cofactor.

The sequence is that of Putative aldolase class 2 protein CC_1201 from Caulobacter vibrioides (strain ATCC 19089 / CIP 103742 / CB 15) (Caulobacter crescentus).